A 415-amino-acid chain; its full sequence is Histidine--tRNA ligase (415 aa).

It belongs to the class-II aminoacyl-tRNA synthetase family. Homodimer.

It is found in the cytoplasm. The catalysed reaction is tRNA(His) + L-histidine + ATP = L-histidyl-tRNA(His) + AMP + diphosphate + H(+). This is Histidine--tRNA ligase from Clostridium botulinum (strain Langeland / NCTC 10281 / Type F).